The following is a 433-amino-acid chain: Vesicle-associated protein (433 aa).

2 tandem repeats follow at residues 112–122 (GGGIGGGLGGG) and 219–229 (GGGIGGGLGGG). Residues 112-350 (GGGIGGGLGG…GGIGGGLGGG (239 aa)) are 3 X 11 AA repeats of G-G-G-I-G-G-G-L-G-G-G. The Nuclear localization signal motif lies at 266 to 274 (VDGKKKGKG). The stretch at 340 to 350 (GGGIGGGLGGG) is repeat 3. Disordered stretches follow at residues 366 to 389 (RVGG…DGDG) and 411 to 433 (HGKG…NVSG). Residues 423–433 (DIERPDLNVSG) are compositionally biased toward basic and acidic residues.

In terms of tissue distribution, egg cortex.

It localises to the microsome membrane. The protein localises to the nucleus. The protein resides in the endoplasmic reticulum membrane. May function as a multidomain RNA-binding protein. May play a role in nuclear RNA processing and in early development. The polypeptide is Vesicle-associated protein (VAP-1) (Strongylocentrotus purpuratus (Purple sea urchin)).